The primary structure comprises 127 residues: MIPSFKSTTQARGALAEDRALAHLQRHGLQPVVRNYRCKGGEIDLVMRAPDGTLVFIEVRQRSASAFGGAAASVTPAKQRRVVLAALHYLSTLAQQPPCRFDVVALAPGRLEWLQHAFDLDTAGEAG.

This sequence belongs to the UPF0102 family.

The polypeptide is UPF0102 protein Reut_A3265 (Cupriavidus pinatubonensis (strain JMP 134 / LMG 1197) (Cupriavidus necator (strain JMP 134))).